The primary structure comprises 416 residues: Putative F-box/kelch-repeat protein At1g12870 (416 aa).

An F-box domain is found at 27–76 (MIASSSLPDDVVEEIFLKLPVKALMRFKSLSKQWRSTLESCYFSQRHLKI). 2 Kelch repeats span residues 199–243 (LVWL…PASA) and 297–341 (CMYE…HVLD).

The polypeptide is Putative F-box/kelch-repeat protein At1g12870 (Arabidopsis thaliana (Mouse-ear cress)).